We begin with the raw amino-acid sequence, 84 residues long: Small ribosomal subunit protein uS17 (84 aa).

This sequence belongs to the universal ribosomal protein uS17 family. In terms of assembly, part of the 30S ribosomal subunit.

In terms of biological role, one of the primary rRNA binding proteins, it binds specifically to the 5'-end of 16S ribosomal RNA. The polypeptide is Small ribosomal subunit protein uS17 (Yersinia enterocolitica serotype O:8 / biotype 1B (strain NCTC 13174 / 8081)).